We begin with the raw amino-acid sequence, 39 residues long: Cecropin-D-like peptide (39 aa).

As to expression, hemolymph.

It is found in the secreted. Functionally, cecropins have lytic and antibacterial activity against several Gram-positive and Gram-negative bacteria. Has antibacterial activity against the Gram-positive bacteria M.luteus (MIC=34.4 uM), L.monocytogenes (MIC=34.4 uM), and S.lutea (MIC=34.4 uM), and the Gram-negative bacterium E.coli D31 (MIC=8.6 uM). Lacks antibacterial activity against the Gram-positive bacterium B.circulans, and the Gram-negative bacteria E.coli ATCC 25922 and S.typhimurium. Has antifungal activity against A.niger, but lacks antifungal activity against C.albicans, C.wickerhamii, F.oxysporum, P.pastoris, P.tannophilus, S.cerevisiae, T.harzianum, and Z.marxianus. The chain is Cecropin-D-like peptide from Galleria mellonella (Greater wax moth).